The chain runs to 558 residues: MFVSSRKTGLIVCFSLIGYTASAFSASLNPAERNETQQRQSEVIEQSRQQREALQQLNNIVQAPLKADNALQGPCFTLREIRFNHSTLLGQRDQTALTAGYLNRCNNLEQINQLMHDVSNWYIQRGYITSRAFLSEQDLSGGVLQLEILEGRLEKITINNQTERMTRTAFPAREGEILNLRDIEQGMEQMNRMPSQQVTIEILPGSQPGYSVVNLTREAHLPFTGGVTFDNSGQKSTGEQQLNGSLALDNLFGVADQWFISAGHSSRFATSHDAESLQAGFSMPYGYWNLGYSYSQSRYRNTFISRDFPWHSTGDSDTHRLSLSRVVFRNGTMKTAIVGMLSQRTGNNYLNGTLLPSSSRKLSSVSLGVNHSQKLWGGLATFNPTYNRGVRWLGAETDTDKSADEPRAEFNKWTLSASYYYPLTDSITYLGSLYGQYSARALYGSEQMTLGGESSVRGFREQYTSGNRGAYWRNELNWQAWQLPVLGNVTFMAAVDGGHLYNHKQDDSTAASLWGGAVGVTVASRWLSQQVTVGWPISYPAWLQPDTVVVGYRVGLSF.

The signal sequence occupies residues 1–25 (MFVSSRKTGLIVCFSLIGYTASAFS). Residues 34 to 62 (NETQQRQSEVIEQSRQQREALQQLNNIVQ) are a coiled coil. Residues 76–151 (FTLREIRFNH…GVLQLEILEG (76 aa)) form the POTRA domain.

This sequence belongs to the TPS (TC 1.B.20) family.

The protein localises to the cell outer membrane. Probable outer membrane protein component of a toxin-immunity protein module, which functions as a cellular contact-dependent growth inhibition (CDI) system. CDI modules allow bacteria to communicate with and inhibit the growth of closely related neighboring bacteria in a contact-dependent fashion. This protein may be required for secretion and assembly of the CdiA toxin. Functionally, probable member of a two partner secretion pathway (TPS) in which it mediates the secretion of CdiA. The sequence is that of Outer membrane transporter CdiB (cdiB) from Dickeya dadantii (strain 3937) (Erwinia chrysanthemi (strain 3937)).